The following is a 129-amino-acid chain: Cytochrome c' (129 aa).

Arg12, Gln13, Thr69, Glu70, Cys119, Cys122, and His123 together coordinate heme c.

In terms of processing, binds 1 heme c group covalently per subunit.

Cytochrome c' is the most widely occurring bacterial c-type cytochrome. Cytochromes c' are high-spin proteins and the heme has no sixth ligand. Their exact function is not known. This is Cytochrome c' from Rubrivivax gelatinosus (Rhodocyclus gelatinosus).